The chain runs to 2561 residues: MSEHTYSLTHAQRRVWFTELLEPDTSICNLTACVKFKGNIELDTLEGALNHSISRNDAIRFQLLEGEELEPRLHLTEYKYYPLRIIDFSNVEMIEIEQWIQDQASIPFKLFNSPLFQFYLLRIDSHEVWLFAKFHHIIMDGISLNVMGNQIIDLYQKMKKKDPLPDQPEPSYLSYIEKESQYLQSPRFAKDRLFWTQTFEHPLEYHSLADQTSLQKQSTSASRDTIILSPDLEQTIRIFCEEHKINIISLFMASFYICISRITSKKDLAIGTYYGNRGSKAEKEMLGMFVSSLPIRITVDPDTDFLSFVRTIGREQLSVMRHQRFPYNLLVNELRNEQKDLHNLIGISMQYQPLQWHNADDFDYETALYFSGYTANELSVQIQERIDNGTIQLNFDYQNTLFSLEDIKRIQSHLLTILENALKHPHSFIRELDMTNTREKQKLLYEFNKTEAVSPKAFTLHGLFERQAAFTPERLAIRFSGGSLTYAELDMYASRLAAHLAARGVTNESIVGVLSERSPDMLIAVLAVLKAGGAYLPLDPAYPKERLSYMLKDSGASLLLTQPGCSAPNFSGETLEVDMTSLASEKAENHEFTPADGGSLAYVIYTSGSTGQPKGVAVEHRQAVSFLTGMQHQFPLSEDDIVMVKTSFSFDASVWQLFWWSLSGASAYLLPPGWEKDSALIVQAIHQENVTTAHFIPAMLNSFLDQAEIERLSDRTSLKRVFAGGEPLAPRTAARFASVLPQVSLIHGYGPTEATVDAAFYVLDPERDRDRLRIPIGKPVPGARLYVLDPHLAVQPSGVAGELYIAGAGVARGYLNRPALTEERFLEDPFYPGERMYKTGDVARWLPDGNVEFLGRTDDQVKIRGYRIEPGEIEAALRSIEGVREAAVTVRTDSGEPELCAYVEGLQRNEVRAQLERLLPGYMVPAYMIEMEQWPVTPSGKLDRNALPAPGGAADAETYTAPRNVTEMKLSQLWEDVLKNGPVGIHDNFFDRGGHSLKATALVSRIAKEFDVQVPLKDVFAHPTVEGLATVIREGTDSPYEAIKPAEKQETYPVSSAQKRIYVLQQLEDGGTGYNMPAVLELEGKLNPERMERAFKELIKRHESLRTSFEQDAGGDPVQRIHDEVPFTLQTTVLGERTEQEAAAAFIKPFDLSQAPLFRAQIVKISDERHLLLVDMHHIISDGVSVNILIREFGELYNNRNLPALRIQYKDYAVWREGFKTGDAYKTQEAYWLKQLEGELPVLDLPADHARPPVRSFAGDKVSFTLDQEVASGLHKLARENGSTLYMVLLAAYTAFLSRLSGQEDIIVGSPIAGRPHKDLEPILGMFVNTLALRTRPEGGKPFVQYLQEVRETALEAFEHQDYPFEELVDKLELTRDMSRNPVFDAMFILQNVEKQDIDLREIKVRPANFAHHISLFDITLIATEISGSICCEMEFSTEVFLKATIERWADHFIEFLHEALSTPETSLAQINILSDKEKQKIVFEFNKTQVEFAQKDIPFHRIFEAKAEENPEHIAVIDNETEISYRLLNERANRLARTLQNRKGPKPTVAVLAKRSIDAIVGVLAVMKAGGVYIPIDAHYPKARIEYILRDSGADILLLQRELKHLISNSPESEMSHIFLDDEGSFEESNCNLNLSPAPEEPVYIIYTSGTTGAPKGVIVTYQNFTHAALAWRQIYELDRKPVRLLQIASFSFDVFSGDLARTLTNGGTLIVCPDETRLEPAEIYKIIKSQRITVMESTPALIIPVMEYVYRNQFKLPDLDILILGSDMVKAQDFKTLTDRFGQSMRIINSYGVTEATIDSSFYETSMGGECTGDNVPIGSPLPNVHMYVLSQTDQIQPIGVAGELCIGGAGVAKGYHHKPDLTQMKFTENPFVSGERLYRTGDRACWLPNGTIRLLGRMDYQVKINGYRIETEEIESVLLQTGLVREAAVAVQHDKNGQAGLAAYIVPSDVNTNALRAALTKELPAYMIPAYLIPLVNMPLTLNGKLDRNALPAPNNVLSRPYTAPVNDLQKTMAYIWEDVLSMSRVGIHDSFFELGGDSIKALQVAARLAAEGWSMTIRDLFRYSTIQELCGHITPLASQADQGPAEGEAELTPIQRRFFGQVHAFHYHYNQSVMLFSEKGFNANALHLALRKITEHHDAIRMIFQRDQNGHVIQFNRGINHKDHELFGLYISDWTKASLERAHLDEKLAAEETVIQSKMNVEKGPLLQAGLFKTAEGDHLLIALHHLVIDGVSWRILLEDLAAAYQQALEKKEIQLPPKTDSYLSYADGLTQIAESKQLLSEKTYWQTILDAHTAFLPKDIENVPDKLQMNSDAAAFVLSGDWTEKLLFETQQAYGTDANELLLTALGMALSEWTGHDQIVISTEGHGREGHVPNIDISRTVGWFTSIYPILLDMGIPEPFEDQLAYRIKTTKDMLRRVPNKGTGYGLLTHIGELRHKEPEVSFNYLGQFSEEKEVETFQLSYYQPRYEIAGEREREYELDINALITDGRLHVKAVYTQVFSKHSIECFMDRFHRHLIETIEHCSQKKAREKTLSDFSNKELTLSALSSIEDLVKDL.

A domain 1 (glutamate-activating) region spans residues M1–S1038. Residues S2–D300 form a condensation 1 region. The adenylation 1 stretch occupies residues T485–V888. In terms of domain architecture, Carrier 1 spans A961–T1036. O-(pantetheine 4'-phosphoryl)serine is present on S996. The segment at K1048–E1338 is condensation 2. The interval K1048 to I2554 is domain 2 (D-ornithine-activating). An adenylation 2 region spans residues S1525 to V1932. Positions A2007–A2081 constitute a Carrier 2 domain. Residue S2042 is modified to O-(pantetheine 4'-phosphoryl)serine. The interval A2089 to I2554 is epimerization.

It belongs to the ATP-dependent AMP-binding enzyme family. Requires pantetheine 4'-phosphate as cofactor.

In terms of biological role, this protein is a multifunctional enzyme, able to activate and polymerize the amino acids Glu and Orn as part of the biosynthesis of the lipopeptide antibiotic lipastatin. The Orn residue is further epimerized to the D-isomer form. The activation sites for these amino acids consist of individual domains. This chain is Plipastatin synthase subunit A (ppsA), found in Bacillus subtilis (strain 168).